The following is a 537-amino-acid chain: Putative cysteine ligase BshC (537 aa).

The stretch at 422–450 (IEKVEGMIEQQRRLNKDLLDEVAGNQNNI) forms a coiled coil.

It belongs to the BshC family.

Functionally, involved in bacillithiol (BSH) biosynthesis. May catalyze the last step of the pathway, the addition of cysteine to glucosamine malate (GlcN-Mal) to generate BSH. The sequence is that of Putative cysteine ligase BshC from Staphylococcus aureus (strain COL).